The following is a 281-amino-acid chain: Kinetochore-associated protein NSL1 homolog (281 aa).

Ser-4 is modified (phosphoserine). Phosphothreonine is present on Thr-244.

As to quaternary structure, component of the MIS12 complex composed of MIS12, DSN1, NSL1/DC8 and PMF1. Interacts with KNL1.

It localises to the nucleus. It is found in the chromosome. Its subcellular location is the centromere. The protein localises to the kinetochore. Its function is as follows. Part of the MIS12 complex which is required for normal chromosome alignment and segregation and kinetochore formation during mitosis. This Homo sapiens (Human) protein is Kinetochore-associated protein NSL1 homolog (NSL1).